Here is a 462-residue protein sequence, read N- to C-terminus: Chromosomal replication initiator protein DnaA (462 aa).

The tract at residues 1 to 83 (MSLSLWQQCL…LRFEVGSKPA (83 aa)) is domain I, interacts with DnaA modulators. The segment at 83-125 (AARAHNNPVTASVSAPVAPVTRSAPMRPSWDNSPAQPELSYRS) is domain II. A disordered region spans residues 104–125 (RSAPMRPSWDNSPAQPELSYRS). Polar residues predominate over residues 112-125 (WDNSPAQPELSYRS). Residues 126 to 342 (NVNPKHTFDN…GALNRVIANA (217 aa)) form a domain III, AAA+ region region. Residues G170, G172, K173, and T174 each coordinate ATP. The tract at residues 343–462 (NFTGRAITID…FSNLIRTLSS (120 aa)) is domain IV, binds dsDNA.

This sequence belongs to the DnaA family. Oligomerizes as a right-handed, spiral filament on DNA at oriC.

The protein resides in the cytoplasm. Plays an essential role in the initiation and regulation of chromosomal replication. ATP-DnaA binds to the origin of replication (oriC) to initiate formation of the DNA replication initiation complex once per cell cycle. Binds the DnaA box (a 9 base pair repeat at the origin) and separates the double-stranded (ds)DNA. Forms a right-handed helical filament on oriC DNA; dsDNA binds to the exterior of the filament while single-stranded (ss)DNA is stabiized in the filament's interior. The ATP-DnaA-oriC complex binds and stabilizes one strand of the AT-rich DNA unwinding element (DUE), permitting loading of DNA polymerase. After initiation quickly degrades to an ADP-DnaA complex that is not apt for DNA replication. Binds acidic phospholipids. This is Chromosomal replication initiator protein DnaA from Yersinia pseudotuberculosis serotype O:1b (strain IP 31758).